Reading from the N-terminus, the 630-residue chain is Neuronal acetylcholine receptor subunit alpha-4 (630 aa).

Residues 1–30 form the signal peptide; that stretch reads MANSGTGAPPPLLLLPLLLLLGTGLLPASS. Topologically, residues 32 to 249 are extracellular; it reads IETRAHAEER…IIRRLPLFYT (218 aa). Residue Asn-59 is glycosylated (N-linked (GlcNAc...) asparagine). The Ca(2+) site is built by Val-78 and Glu-80. Asn-109 and Asn-176 each carry an N-linked (GlcNAc...) asparagine glycan. Intrachain disulfides connect Cys-163–Cys-177 and Cys-227–Cys-228. The chain crosses the membrane as a helical span at residues 250-270; sequence INLIIPCLLISCLTVLVFYLP. A lipid anchor (S-palmitoyl cysteine) is attached at Cys-273. 2 consecutive transmembrane segments (helical) span residues 279-299 and 313-333; these read LCIS…EIIP and LLFT…VLNV. Residues 334–604 lie on the Cytoplasmic side of the membrane; sequence HHRSPRTHTM…WKYVAMVIDR (271 aa). Disordered stretches follow at residues 418–463 and 505–526; these read TAVE…SGAP and SLAD…SQLP. Ser-428 carries the phosphoserine modification. Positions 434-443 are enriched in basic and acidic residues; the sequence is PDLKTSEVEK. A compositionally biased stretch (pro residues) spans 447 to 457; it reads CPSPGSCPPPK. Residues Ser-542 and Ser-545 each carry the phosphoserine modification. Residues 605–625 traverse the membrane as a helical segment; it reads IFLWMFIIVCLLGTVGLFLPP.

The protein belongs to the ligand-gated ion channel (TC 1.A.9) family. Acetylcholine receptor (TC 1.A.9.1) subfamily. Alpha-4/CHRNA4 sub-subfamily. As to quaternary structure, neuronal AChR is composed of two different types of subunits: alpha and beta. CHRNA4 forms heteropentameric neuronal acetylcholine receptors with CHRNB2 and CHRNB4, as well as CHRNA5 and CHRNB3 as accesory subunits. Found in two major stoichiometric forms, LS (low agonist sensitivity): (CHRNA4)3:(CHRNB2)2 and HS (high agonist sensitivity): (CHRNA4)2:(CHRNB2)3, the two stoichiometric forms differ in their unitary conductance, calcium permeability, ACh sensitivity and potentiation by divalent cation. Cells produce predominantly an (CHRNA4)3:(CHRNB2)2 nAChR. The (CHRNA4)2:(CHRNB2)3 expression is selectively up-regulated by nicotine and has lower single channel conductance and calcium permeability. In the striatum, also forms CHRNA4:CHRNA6:CHRNB2 complexes. Also found in the stoichiometric form: (CHRNA4:CHRNB2)2:CHRNB3. Interacts with RIC3; which is required for proper folding and assembly. Interacts with LYPD6. In terms of tissue distribution, in various regions of the central nervous system. Expressed in hippocampal neurons.

Its subcellular location is the presynaptic cell membrane. It localises to the cell membrane. The catalysed reaction is Ca(2+)(in) = Ca(2+)(out). The enzyme catalyses K(+)(in) = K(+)(out). It catalyses the reaction Na(+)(in) = Na(+)(out). Its activity is regulated as follows. Activated by a myriad of ligands such as acetylcholine, cytisine, nicotine, choline and epibatidine. Channel potentiation by calcium is stoichiometry-selective, CHRNA4:CHRNB2 nACh receptor is achieved by calcium association with topographically distinct sites framed by anionic residues within the CHRNA4 subunit and between the CHRNA4 and CHRNB2 subunits. nAChR activity is inhibited by the antagonist alpha-conotoxins BuIA, PnIA, GID and MII, small disulfide-constrained peptides from cone snails. Component of neuronal acetylcholine receptors (nAChRs) that function as pentameric, ligand-gated cation channels with high calcium permeability among other activities. nAChRs are excitatory neurotrasnmitter receptors formed by a collection of nAChR subunits known to mediate synaptic transmission in the nervous system and the neuromuscular junction. Each nAchR subunit confers differential attributes to channel properties, including activation, deactivation and desensitization kinetics, pH sensitivity, cation permeability, and binding to allosteric modulators. CHRNA4 forms heteropentameric neuronal acetylcholine receptors with CHRNB2 and CHRNB4, as well as CHRNA5 and CHRNB3 as accesory subunits. Is the most abundant nAChR subtype expressed in the central nervous system. Found in two major stoichiometric forms,(CHRNA4)3:(CHRNB2)2 and (CHRNA4)2:(CHRNB2)3, the two stoichiometric forms differ in their unitary conductance, calcium permeability, ACh sensitivity and potentiation by divalent cation. Involved in the modulation of calcium-dependent signaling pathways, influences the release of neurotransmitters, including dopamine, glutamate and GABA. The chain is Neuronal acetylcholine receptor subunit alpha-4 (Chrna4) from Rattus norvegicus (Rat).